Here is a 1571-residue protein sequence, read N- to C-terminus: Paternally-expressed gene 3 protein (1571 aa).

2 disordered regions span residues 1 to 120 (MYHH…NPIQ) and 137 to 241 (AEDD…QERG). 5 stretches are compositionally biased toward basic and acidic residues: residues 35 to 56 (GSERDLERRGRSRDVEPRDRWP), 80 to 99 (FGLDRDDDRRSMDYESRSQD), 169 to 186 (PEAKKPSHRRGICEDESS), 193 to 215 (KFIKDVARNPKSGRARELNERPP), and 223 to 241 (DNWKDSSSSRRESVIQERG). A 10 X 5 AA repeat of P-H-X-X-E region spans residues 199-265 (ARNPKSGRAR…DLASRSRALE (67 aa)). The segment at 199 to 265 (ARNPKSGRAR…DLASRSRALE (67 aa)) is 3 X 5 AA repeat of P-H-D-D-K. C2H2-type zinc fingers lie at residues 325–347 (YVCDECGRQFSVISEFVEHQIMH), 378–400 (FECKECGETFSRSAALAEHRQIH), 436–458 (YECKVCKETFLHSSALIEHQKIH), and 520–542 (YECKVCGESFLHLSSLREHQKIH). The interval 456–495 (KIHGRGNSDDRDNERERERDRLRARAREQRERERERERER) is disordered. 3 disordered regions span residues 585–649 (ALMG…LKFP), 672–713 (EAQK…TYEG), and 764–820 (REDA…AKKK). The span at 592-614 (SSEHQKNRSRRNFFEGRGFEKPF) shows a compositional bias: basic and acidic residues. Composition is skewed to polar residues over residues 770-781 (GSSSSNYHTPNV) and 799-808 (DVTFSVPSSS). The segment covering 809–820 (VREHQKARAKKK) has biased composition (basic and acidic residues). A C2H2-type 5 zinc finger spans residues 850–872 (FECQECGEAFARRSELIEHQKIH). Residues 937–1070 (FNAEEPHDKE…ESHGQEKVED (134 aa)) are disordered. Residues 940–1070 (EEPHDKETHG…ESHGQEKVED (131 aa)) show a composition bias toward basic and acidic residues. Tandem repeats lie at residues 942-946 (PHDKE), 967-971 (PHGDE), 987-991 (PHDDK), 992-996 (PHGQE), 997-1001 (PHDDK), 1002-1006 (PHGQE), 1007-1011 (PHDDK), 1012-1016 (PHGQE), 1017-1021 (PHGDE), 1022-1026 (PHGQE), 1027-1031 (PHGDE), 1032-1036 (PHDKE), and 1047-1051 (PHSEE). C2H2-type zinc fingers lie at residues 1091 to 1113 (YECQDCGLGFTDLNDLTSHQDTH), 1147 to 1169 (YECPKCGESFIHSSLLFEHQRVH), 1209 to 1231 (IRCRQCGQGFIHSSALNEHMRQH), and 1266 to 1289 (FECTICGECFFTAKQLGDHHTKVH). The C2H2-type 10; degenerate zinc finger occupies 1317-1339 (YECKDCGQSFLDDTVIAERMVFH). A disordered region spans residues 1373-1487 (NAEAAEPEVE…DQEIEVEEPY (115 aa)). Acidic residues-rich tracts occupy residues 1377-1397 (AEPEVEAAEPEVEAAEPEVEA), 1405-1418 (EGPDGEAAEPDGEA), and 1431-1485 (DADE…EVEE). C2H2-type zinc fingers lie at residues 1488-1510 (YNCHECAETFASSSAFGEHLKSH) and 1547-1569 (FKCDVCGQLFNDRLSLARHQNSH).

This sequence belongs to the krueppel C2H2-type zinc-finger protein family. Homodimer. Interacts with SIAH1A and SIAH2. Interacts with TRAF2. In terms of tissue distribution, brain, glial cells, neurons, skeletal muscle, uterus and placenta. In the placenta it is found in all trophoblast cells.

The protein localises to the nucleus. Its subcellular location is the cytoplasm. Functionally, induces apoptosis in cooperation with SIAH1A. Acts as a mediator between p53/TP53 and BAX in a neuronal death pathway that is activated by DNA damage. Acts synergistically with TRAF2 and inhibits TNF induced apoptosis through activation of NF-kappa-B. Plays a role in regulating maternal behavior and offspring growth. The protein is Paternally-expressed gene 3 protein (Peg3) of Mus musculus (Mouse).